Here is a 760-residue protein sequence, read N- to C-terminus: BMP/retinoic acid-inducible neural-specific protein 1 (760 aa).

A signal peptide spans 1 to 16 (MNWRFVELLYFLFVWG). Positions 68–251 (RYKIYREFAR…FVQSALSYIM (184 aa)) constitute an MACPF domain. N-linked (GlcNAc...) asparagine glycans are attached at residues asparagine 156, asparagine 433, asparagine 443, asparagine 553, asparagine 599, asparagine 630, and asparagine 676.

The protein belongs to the BRINP family. Expressed in brain. Expressed in GABAergic neurons of the pre-frontal cortex. Weakly expressed in embryonic stem (ES) cells and in ES-derived neural stem cells (NSCs).

The protein localises to the cytoplasm. In terms of biological role, plays a role in neurogenesis, brain development, and the functioning of GABAergic neurons. May suppress cell cycle progression in postmitotic neurons by inhibiting G1/S transition. In Mus musculus (Mouse), this protein is BMP/retinoic acid-inducible neural-specific protein 1 (Brinp1).